The sequence spans 411 residues: Argininosuccinate lyase (411 aa).

This sequence belongs to the lyase 1 family. Argininosuccinate lyase subfamily.

The protein localises to the cytoplasm. It carries out the reaction 2-(N(omega)-L-arginino)succinate = fumarate + L-arginine. The protein operates within amino-acid biosynthesis; L-arginine biosynthesis; L-arginine from L-ornithine and carbamoyl phosphate: step 3/3. The protein is Argininosuccinate lyase of Legionella pneumophila subsp. pneumophila (strain Philadelphia 1 / ATCC 33152 / DSM 7513).